The sequence spans 470 residues: Cholesterol 7-desaturase nvd 1 (470 aa).

The helical transmembrane segment at 67 to 87 (LALCIAGFSVLMYFLYVLVFV) threads the bilayer. The Rieske domain maps to 136 to 238 (FRLVDSQQLE…CREVNKAIFV (103 aa)). [2Fe-2S] cluster is bound by residues Cys176, His178, Cys196, and His199.

This sequence belongs to the cholesterol 7-desaturase family. Requires [2Fe-2S] cluster as cofactor.

Its subcellular location is the membrane. The catalysed reaction is cholesterol + NADPH + O2 + H(+) = 7-dehydrocholesterol + NADP(+) + 2 H2O. The enzyme catalyses cholesterol + NADH + O2 + H(+) = 7-dehydrocholesterol + NAD(+) + 2 H2O. The protein operates within steroid hormone biosynthesis; dafachronic acid biosynthesis. Its function is as follows. Catalyzes the production of 7-dehydrocholesterol (7-DHC or cholesta-5,7-dien-3beta-ol) by inserting a double bond (desaturating) at the C7-C8 single bond of cholesterol. Essential regulator of steroid biosynthesis as this reaction is the first step in the synthesis of the steroid hormone Delta(7)-dafachronic acid. The chain is Cholesterol 7-desaturase nvd 1 from Ciona intestinalis (Transparent sea squirt).